The following is a 439-amino-acid chain: Diaminopimelate decarboxylase (439 aa).

N6-(pyridoxal phosphate)lysine is present on Lys-66. Residues Gly-248 and 290–293 contribute to the pyridoxal 5'-phosphate site; that span reads EPGR. Arg-293, Arg-330, and Tyr-334 together coordinate substrate. Cys-361 functions as the Proton donor in the catalytic mechanism. Residues Glu-362 and Tyr-390 each contribute to the substrate site. Tyr-390 is a binding site for pyridoxal 5'-phosphate.

Belongs to the Orn/Lys/Arg decarboxylase class-II family. LysA subfamily. Homodimer. It depends on pyridoxal 5'-phosphate as a cofactor.

The catalysed reaction is meso-2,6-diaminopimelate + H(+) = L-lysine + CO2. The protein operates within amino-acid biosynthesis; L-lysine biosynthesis via DAP pathway; L-lysine from DL-2,6-diaminopimelate: step 1/1. Specifically catalyzes the decarboxylation of meso-diaminopimelate (meso-DAP) to L-lysine. The polypeptide is Diaminopimelate decarboxylase (Bacillus subtilis (strain 168)).